Here is a 375-residue protein sequence, read N- to C-terminus: Flagellin (375 aa).

Belongs to the bacterial flagellin family.

The protein localises to the secreted. The protein resides in the bacterial flagellum. Its function is as follows. Flagellin is the subunit protein which polymerizes to form the filaments of bacterial flagella. Flagella are an important component in the invasiveness of B.bacilliformis. The chain is Flagellin from Bartonella bacilliformis.